Here is a 307-residue protein sequence, read N- to C-terminus: Aspartate carbamoyltransferase catalytic subunit (307 aa).

Residues R58 and T59 each contribute to the carbamoyl phosphate site. L-aspartate is bound at residue K86. The carbamoyl phosphate site is built by R108, H136, and Q139. L-aspartate-binding residues include R169 and R223. Carbamoyl phosphate-binding residues include G264 and P265.

It belongs to the aspartate/ornithine carbamoyltransferase superfamily. ATCase family. As to quaternary structure, heterododecamer (2C3:3R2) of six catalytic PyrB chains organized as two trimers (C3), and six regulatory PyrI chains organized as three dimers (R2).

It carries out the reaction carbamoyl phosphate + L-aspartate = N-carbamoyl-L-aspartate + phosphate + H(+). The protein operates within pyrimidine metabolism; UMP biosynthesis via de novo pathway; (S)-dihydroorotate from bicarbonate: step 2/3. Catalyzes the condensation of carbamoyl phosphate and aspartate to form carbamoyl aspartate and inorganic phosphate, the committed step in the de novo pyrimidine nucleotide biosynthesis pathway. The chain is Aspartate carbamoyltransferase catalytic subunit from Moorella thermoacetica (strain ATCC 39073 / JCM 9320).